The chain runs to 157 residues: MDVVMKLNNIFSGLPKKKKSKVLGRGIGCGKGKTSGRGHKGQKARSGVSINGFEGGQQSIFTRLPKRGFNSLPKNKYSIINVSLIQRLIDSGKIDNVSAITKEVLYNLGVISSVKQKIKILGDGKLNTTVCIEYDFISKSAKSQVTLLNSLSDSESK.

The protein belongs to the universal ribosomal protein uL15 family. As to quaternary structure, part of the 50S ribosomal subunit.

Binds to the 23S rRNA. This chain is Large ribosomal subunit protein uL15, found in Ehrlichia ruminantium (strain Gardel).